The sequence spans 179 residues: Large ribosomal subunit protein uL6 (179 aa).

It belongs to the universal ribosomal protein uL6 family. In terms of assembly, part of the 50S ribosomal subunit.

In terms of biological role, this protein binds to the 23S rRNA, and is important in its secondary structure. It is located near the subunit interface in the base of the L7/L12 stalk, and near the tRNA binding site of the peptidyltransferase center. In Streptomyces griseus subsp. griseus (strain JCM 4626 / CBS 651.72 / NBRC 13350 / KCC S-0626 / ISP 5235), this protein is Large ribosomal subunit protein uL6.